We begin with the raw amino-acid sequence, 727 residues long: Endothelin-converting enzyme homolog (727 aa).

At 1–44 (MSFNFSRYSGAYTTTFSFLLLALLIVSAVLLSRPYAPALLHAEE) the chain is on the cytoplasmic side. The chain crosses the membrane as a helical; Signal-anchor for type II membrane protein span at residues 45–65 (AYCVSMSCVTAAASVLSLMDA). Residues 46 to 727 (YCVSMSCVTA…MNPVHKCEVW (682 aa)) form the Peptidase M13 domain. 5 cysteine pairs are disulfide-bonded: Cys-47–Cys-52, Cys-70–Cys-712, Cys-78–Cys-672, Cys-134–Cys-392, and Cys-601–Cys-724. Over 66 to 727 (TADPCSDFYQ…MNPVHKCEVW (662 aa)) the chain is Extracellular. Asn-138, Asn-160, Asn-164, Asn-169, Asn-222, Asn-309, Asn-337, Asn-340, and Asn-511 each carry an N-linked (GlcNAc...) asparagine glycan. Zn(2+) is bound at residue His-564. Glu-565 is an active-site residue. His-568 is a binding site for Zn(2+). N-linked (GlcNAc...) asparagine glycans are attached at residues Asn-589 and Asn-608. Glu-624 is a Zn(2+) binding site. The Proton donor role is filled by Asp-628. An N-linked (GlcNAc...) asparagine glycan is attached at Asn-656.

The protein belongs to the peptidase M13 family. It depends on Zn(2+) as a cofactor. In terms of tissue distribution, highly expressed in brain and midgut, and to a lesser extent in fat body, ovaries, testes and haemocytes.

The protein localises to the cell membrane. The protein is Endothelin-converting enzyme homolog of Locusta migratoria (Migratory locust).